A 239-amino-acid polypeptide reads, in one-letter code: Prolyl hydroxylase EGLN3 (239 aa).

The interval 62 to 73 (AGPRAGVSKRHL) is beta(2)beta(3) 'finger-like' loop. The segment at 88 to 104 (CEAISFLLSLIDRLVLY) is required for interaction with ADRB2. A Fe2OG dioxygenase domain is found at 116–214 (ERSKAMVACY…RYAMTVWYFD (99 aa)). H135, D137, and H196 together coordinate Fe cation. R205 lines the 2-oxoglutarate pocket.

As to quaternary structure, interacts with BCL2 (via its BH4 domain); the interaction disrupts the BAX-BCL4 complex inhibiting the anti-apoptotic activity of BCL2. Interacts with WDR83; the interaction leads to almost complete elimination of HIF-mediated reporter activity. Interacts with ADRB2; the interaction hydroxylates ADRB2 facilitating its ubiquitination by the VHL-E3 ligase complex. Interacts with PAX2; the interaction targets PAX2 for destruction. Interacts with PKM; the interaction hydroxylates PKM in hypoxia. Interacts with LIMD1, WTIP and AJUBA. The cofactor is Fe(2+). It depends on L-ascorbate as a cofactor. Post-translationally, ubiquitinated by SIAH1 and/or SIAH2 in response to the unfolded protein response (UPR), leading to its degradation. Widely expressed at low levels. Expressed at higher levels in adult heart (cardiac myocytes, aortic endothelial cells and coronary artery smooth muscle), lung and placenta, and in fetal spleen, heart and skeletal muscle. Also expressed in pancreas. Localized to pancreatic acini and islet cells.

It localises to the nucleus. The protein localises to the cytoplasm. It catalyses the reaction L-prolyl-[protein] + 2-oxoglutarate + O2 = trans-4-hydroxy-L-prolyl-[protein] + succinate + CO2. The catalysed reaction is L-prolyl-[hypoxia-inducible factor alpha subunit] + 2-oxoglutarate + O2 = trans-4-hydroxy-L-prolyl-[hypoxia-inducible factor alpha subunit] + succinate + CO2. Its activity is regulated as follows. Activated in cardiovascular cells and Hela cells following exposure to hypoxia. Inhibited by polynitrogen compounds probably by chelation to Fe(2+) ions. In terms of biological role, prolyl hydroxylase that mediates hydroxylation of proline residues in target proteins, such as PKM, TELO2, ATF4 and HIF1A. Target proteins are preferentially recognized via a LXXLAP motif. Cellular oxygen sensor that catalyzes, under normoxic conditions, the post-translational formation of 4-hydroxyproline in hypoxia-inducible factor (HIF) alpha proteins. Hydroxylates a specific proline found in each of the oxygen-dependent degradation (ODD) domains (N-terminal, NODD, and C-terminal, CODD) of HIF1A. Also hydroxylates HIF2A. Has a preference for the CODD site for both HIF1A and HIF2A. Hydroxylation on the NODD site by EGLN3 appears to require prior hydroxylation on the CODD site. Hydroxylated HIFs are then targeted for proteasomal degradation via the von Hippel-Lindau ubiquitination complex. Under hypoxic conditions, the hydroxylation reaction is attenuated allowing HIFs to escape degradation resulting in their translocation to the nucleus, heterodimerization with HIF1B, and increased expression of hypoxy-inducible genes. ELGN3 is the most important isozyme in limiting physiological activation of HIFs (particularly HIF2A) in hypoxia. Also hydroxylates PKM in hypoxia, limiting glycolysis. Under normoxia, hydroxylates and regulates the stability of ADRB2. Regulator of cardiomyocyte and neuronal apoptosis. In cardiomyocytes, inhibits the anti-apoptotic effect of BCL2 by disrupting the BAX-BCL2 complex. In neurons, has a NGF-induced proapoptotic effect, probably through regulating CASP3 activity. Also essential for hypoxic regulation of neutrophilic inflammation. Plays a crucial role in DNA damage response (DDR) by hydroxylating TELO2, promoting its interaction with ATR which is required for activation of the ATR/CHK1/p53 pathway. Also mediates hydroxylation of ATF4, leading to decreased protein stability of ATF4. This Homo sapiens (Human) protein is Prolyl hydroxylase EGLN3.